A 363-amino-acid chain; its full sequence is Ribosomal RNA large subunit methyltransferase M (363 aa).

Residues Ser-190, 223–226, Asp-242, Asp-262, and Asp-279 each bind S-adenosyl-L-methionine; that span reads CPGG. The active-site Proton acceptor is Lys-308.

The protein belongs to the class I-like SAM-binding methyltransferase superfamily. RNA methyltransferase RlmE family. RlmM subfamily. As to quaternary structure, monomer.

The protein localises to the cytoplasm. It carries out the reaction cytidine(2498) in 23S rRNA + S-adenosyl-L-methionine = 2'-O-methylcytidine(2498) in 23S rRNA + S-adenosyl-L-homocysteine + H(+). Functionally, catalyzes the 2'-O-methylation at nucleotide C2498 in 23S rRNA. The chain is Ribosomal RNA large subunit methyltransferase M from Vibrio vulnificus (strain CMCP6).